We begin with the raw amino-acid sequence, 380 residues long: 1-deoxy-D-xylulose 5-phosphate reductoisomerase (380 aa).

8 residues coordinate NADPH: Thr10, Gly11, Ser12, Ile13, Gly35, Arg36, Asn37, and Asn121. Lys122 contacts 1-deoxy-D-xylulose 5-phosphate. An NADPH-binding site is contributed by Glu123. A Mn(2+)-binding site is contributed by Asp147. The 1-deoxy-D-xylulose 5-phosphate site is built by Ser148, Glu149, Ser173, and His196. Glu149 lines the Mn(2+) pocket. Position 202 (Gly202) interacts with NADPH. 4 residues coordinate 1-deoxy-D-xylulose 5-phosphate: Ser209, Asn214, Lys215, and Glu218. Residue Glu218 coordinates Mn(2+).

This sequence belongs to the DXR family. It depends on Mg(2+) as a cofactor. Mn(2+) is required as a cofactor.

The enzyme catalyses 2-C-methyl-D-erythritol 4-phosphate + NADP(+) = 1-deoxy-D-xylulose 5-phosphate + NADPH + H(+). The protein operates within isoprenoid biosynthesis; isopentenyl diphosphate biosynthesis via DXP pathway; isopentenyl diphosphate from 1-deoxy-D-xylulose 5-phosphate: step 1/6. Its function is as follows. Catalyzes the NADPH-dependent rearrangement and reduction of 1-deoxy-D-xylulose-5-phosphate (DXP) to 2-C-methyl-D-erythritol 4-phosphate (MEP). The sequence is that of 1-deoxy-D-xylulose 5-phosphate reductoisomerase from Agathobacter rectalis (strain ATCC 33656 / DSM 3377 / JCM 17463 / KCTC 5835 / VPI 0990) (Eubacterium rectale).